A 400-amino-acid polypeptide reads, in one-letter code: Acetate kinase (400 aa).

Mg(2+) is bound at residue Asn-10. Residue Lys-17 participates in ATP binding. Arg-91 serves as a coordination point for substrate. Asp-150 (proton donor/acceptor) is an active-site residue. Residues 210–214 (HLGNG), 285–287 (DCR), and 333–337 (GIGEN) each bind ATP. Mg(2+) is bound at residue Glu-387.

The protein belongs to the acetokinase family. Homodimer. It depends on Mg(2+) as a cofactor. The cofactor is Mn(2+).

It is found in the cytoplasm. It carries out the reaction acetate + ATP = acetyl phosphate + ADP. It participates in metabolic intermediate biosynthesis; acetyl-CoA biosynthesis; acetyl-CoA from acetate: step 1/2. Catalyzes the formation of acetyl phosphate from acetate and ATP. Can also catalyze the reverse reaction. The protein is Acetate kinase of Pectobacterium carotovorum subsp. carotovorum (strain PC1).